A 272-amino-acid polypeptide reads, in one-letter code: MDSSSISRWFEYESGHAWCESAYKYQTLPYVAEFANTCTNLPIIVLPLVNIMLLRRYLHDVNGGLVFPQLLLTFNGLASTYYHATLNLFGQLVDELSLVWIITVFLVVYIPVMKWFPERFSKRLTVVRWVVLIVTAVVSALCFLEPNLNAIALMLFSIPAAVVIRYEGKQSGIPDIENFPSRILALWGVAFSFWFADRLLCDFWLYLGTPYLHALFHLLAGLAGYTIFIMFSMIDIESRSKTHRYTAAVRYFPDKNGSIFSFPYISLKERSQ.

Transmembrane regions (helical) follow at residues 34-54 (FANTCTNLPIIVLPLVNIMLL) and 61-81 (VNGGLVFPQLLLTFNGLASTY). His-83 lines the Zn(2+) pocket. Transmembrane regions (helical) follow at residues 96-116 (LSLVWIITVFLVVYIPVMKWF), 124-144 (LTVVRWVVLIVTAVVSALCFL), 148-168 (LNAIALMLFSIPAAVVIRYEG), and 183-203 (ILALWGVAFSFWFADRLLCDF). Zn(2+) contacts are provided by His-213 and His-217. Residues 214–234 (ALFHLLAGLAGYTIFIMFSMI) form a helical membrane-spanning segment. Residue Asn-256 is glycosylated (N-linked (GlcNAc...) asparagine).

It belongs to the alkaline ceramidase family. Requires Zn(2+) as cofactor.

The protein resides in the membrane. The enzyme catalyses an N-acylsphing-4-enine + H2O = sphing-4-enine + a fatty acid. Hydrolyzes the sphingolipid ceramide into sphingosine and free fatty acid. The sequence is that of Alkaline ceramidase from Caenorhabditis briggsae.